The primary structure comprises 725 residues: Another transcription unit protein (725 aa).

The segment covering 1–10 (MGSQNSDDDS) has biased composition (acidic residues). Disordered stretches follow at residues 1–379 (MGSQ…PETR), 566–603 (RQAMRNQHKSLPKKKKPGAGEPLIGGGTSSYQHDEGSD), and 617–725 (YKKG…SDND). Over residues 11 to 70 (GSSGSSRSGSRSVTPQGGSAPGSQRSRRSGSGSDRSRSGSRSSRSRSGSGSPRSARSGSA) the composition is skewed to low complexity. Positions 82-101 (RSKRSRSAHSRRSGSARSRK) are enriched in basic residues. Residues 104–116 (TPESPQSHRSGSL) are compositionally biased toward polar residues. A compositionally biased stretch (low complexity) spans 117–140 (QSRKSGSPQSRRSGSPQSRKSGST). The segment covering 141 to 160 (HSRRSGSAHSRRSGSARSRK) has biased composition (basic residues). 4 positions are modified to phosphoserine: S175, S186, S188, and S190. The segment covering 206-223 (SRSRSRSRSGSRTSRSRS) has biased composition (basic residues). The segment covering 224–242 (KTGTPSPNRSRSGSASGSG) has biased composition (low complexity). 3 positions are modified to phosphoserine: S265, S267, and S269. T286 carries the post-translational modification Phosphothreonine. Phosphoserine is present on residues S288, S290, and S312. Positions 306–318 (GDADDISDDEDEA) are enriched in acidic residues. Basic residues predominate over residues 325–353 (SPVRSKSRSQSKSHSHSRSMSHSRSRSRS). Residues 354-369 (RSRDKVESQVESAPKE) are compositionally biased toward basic and acidic residues. S355 carries the phosphoserine modification. Residues 571–582 (NQHKSLPKKKKP) show a composition bias toward basic residues. A Phosphothreonine modification is found at T593. Phosphoserine is present on residues S595, S602, and S631. Position 632 is a phosphothreonine (T632). Residues S635, S636, and S642 each carry the phosphoserine modification. A compositionally biased stretch (basic and acidic residues) spans 644-665 (FEARRSKKVDKAKASKALRDSD). Positions 710–725 (SGSGSGSGSGSGSDND) are enriched in gly residues.

This chain is Another transcription unit protein (Atu), found in Drosophila melanogaster (Fruit fly).